The chain runs to 227 residues: ATP-dependent dethiobiotin synthetase BioD (227 aa).

13-18 is an ATP binding site; it reads DIGKTY. Residue Thr-17 coordinates Mg(2+). Lys-38 is a catalytic residue. Substrate is bound at residue Ser-42. Residues Asp-55, 116 to 119, and 179 to 180 contribute to the ATP site; these read EGSG and NN. Mg(2+)-binding residues include Asp-55 and Glu-116.

This sequence belongs to the dethiobiotin synthetase family. Homodimer. Mg(2+) serves as cofactor.

Its subcellular location is the cytoplasm. It carries out the reaction (7R,8S)-7,8-diammoniononanoate + CO2 + ATP = (4R,5S)-dethiobiotin + ADP + phosphate + 3 H(+). It functions in the pathway cofactor biosynthesis; biotin biosynthesis; biotin from 7,8-diaminononanoate: step 1/2. Functionally, catalyzes a mechanistically unusual reaction, the ATP-dependent insertion of CO2 between the N7 and N8 nitrogen atoms of 7,8-diaminopelargonic acid (DAPA, also called 7,8-diammoniononanoate) to form a ureido ring. In Clostridium botulinum (strain Eklund 17B / Type B), this protein is ATP-dependent dethiobiotin synthetase BioD.